Here is a 244-residue protein sequence, read N- to C-terminus: 1-(5-phosphoribosyl)-5-[(5-phosphoribosylamino)methylideneamino] imidazole-4-carboxamide isomerase (244 aa).

Catalysis depends on D10, which acts as the Proton acceptor. D132 functions as the Proton donor in the catalytic mechanism.

Belongs to the HisA/HisF family.

The protein localises to the cytoplasm. The enzyme catalyses 1-(5-phospho-beta-D-ribosyl)-5-[(5-phospho-beta-D-ribosylamino)methylideneamino]imidazole-4-carboxamide = 5-[(5-phospho-1-deoxy-D-ribulos-1-ylimino)methylamino]-1-(5-phospho-beta-D-ribosyl)imidazole-4-carboxamide. It participates in amino-acid biosynthesis; L-histidine biosynthesis; L-histidine from 5-phospho-alpha-D-ribose 1-diphosphate: step 4/9. This is 1-(5-phosphoribosyl)-5-[(5-phosphoribosylamino)methylideneamino] imidazole-4-carboxamide isomerase from Xanthomonas euvesicatoria pv. vesicatoria (strain 85-10) (Xanthomonas campestris pv. vesicatoria).